Here is a 619-residue protein sequence, read N- to C-terminus: Dynein axonemal intermediate chain 2 (619 aa).

WD repeat units follow at residues 214-254 (KPSS…LVAE), 261-302 (SHRD…EPTE), 362-401 (GHHGPIYALQRNPFYPKNFLTVGDWAARIWSEESRESSIM), 405-445 (YHMA…CDPA), and 450-489 (VCDDPLFCLRVQDTGCLIACGSELGTTTLLEVSSSLSTLQ). A disordered region spans residues 566–619 (EALKKKPKPKKASIEVEGEDELEDIAGEEEESGIIMGEDTGEDDMDEKNEGGAP). A compositionally biased stretch (acidic residues) spans 581–597 (VEGEDELEDIAGEEEES).

This sequence belongs to the dynein intermediate chain family. Consists of at least two heavy chains and a number of intermediate and light chains. Interacts with DNAAF2. Interacts with DNAAF6/PIH1D3. Interacts with HEATR2; probably involved in outer arm dynein assembly. Interacts with CFAP53.

The protein resides in the cytoplasm. It localises to the cytoskeleton. It is found in the cilium axoneme. The protein localises to the dynein axonemal particle. Part of the dynein complex of respiratory cilia. The chain is Dynein axonemal intermediate chain 2 (Dnai2) from Rattus norvegicus (Rat).